We begin with the raw amino-acid sequence, 477 residues long: UDP-N-acetylmuramoylalanine--D-glutamate ligase (477 aa).

125–131 serves as a coordination point for ATP; that stretch reads GTNGKST.

This sequence belongs to the MurCDEF family.

It is found in the cytoplasm. It carries out the reaction UDP-N-acetyl-alpha-D-muramoyl-L-alanine + D-glutamate + ATP = UDP-N-acetyl-alpha-D-muramoyl-L-alanyl-D-glutamate + ADP + phosphate + H(+). It functions in the pathway cell wall biogenesis; peptidoglycan biosynthesis. Cell wall formation. Catalyzes the addition of glutamate to the nucleotide precursor UDP-N-acetylmuramoyl-L-alanine (UMA). The sequence is that of UDP-N-acetylmuramoylalanine--D-glutamate ligase from Rhodospirillum rubrum (strain ATCC 11170 / ATH 1.1.1 / DSM 467 / LMG 4362 / NCIMB 8255 / S1).